A 685-amino-acid polypeptide reads, in one-letter code: ATP-dependent permease MDL1 (685 aa).

Positions 48 to 70 (FNSKSSTAPNTEANSNGSTNSQS) are enriched in polar residues. Residues 48–76 (FNSKSSTAPNTEANSNGSTNSQSDTKKPR) are disordered. Residue N63 is glycosylated (N-linked (GlcNAc...) asparagine). Residues 96–116 (LIFFALICLVTTSATSMALPL) traverse the membrane as a helical segment. The ABC transmembrane type-1 domain maps to 97 to 407 (IFFALICLVT…LGNFYTELMK (311 aa)). The segment at 125-147 (TKKDDDDDKDNDNDDKDDTQPSD) is disordered. A compositionally biased stretch (acidic residues) spans 129–141 (DDDDKDNDNDDKD). A helical transmembrane segment spans residues 158–180 (FYSALGVLFIVSASTNFGRIYLL). An N-linked (GlcNAc...) asparagine glycan is attached at N239. The chain crosses the membrane as a helical span at residues 266–282 (LCMSLIFPPLITMSWFY). N-linked (GlcNAc...) asparagine glycosylation occurs at N336. 2 consecutive transmembrane segments (helical) span residues 353 to 373 (GFIGNVTMIGLLIMGTKLIGA) and 381 to 401 (LSSFMMYAVYTGTSVFGLGNF). In terms of domain architecture, ABC transporter spans 440–680 (IEFKGIDFTY…PNSQFNKLLK (241 aa)). 475–482 (GPSGSGKS) contributes to the ATP binding site. N553 and N576 each carry an N-linked (GlcNAc...) asparagine glycan.

It belongs to the ABC transporter superfamily. ABCB family. Mitochondrial peptide exporter (TC 3.A.1.212) subfamily.

Its subcellular location is the membrane. The polypeptide is ATP-dependent permease MDL1 (MDL1) (Candida albicans (Yeast)).